Reading from the N-terminus, the 419-residue chain is UDP-N-acetylglucosamine 1-carboxyvinyltransferase (419 aa).

Position 22-23 (22-23 (KN)) interacts with phosphoenolpyruvate. Residue Arg-91 coordinates UDP-N-acetyl-alpha-D-glucosamine. Cys-115 functions as the Proton donor in the catalytic mechanism. 2-(S-cysteinyl)pyruvic acid O-phosphothioketal is present on Cys-115. UDP-N-acetyl-alpha-D-glucosamine contacts are provided by residues 120 to 124 (RPVDL), 160 to 163 (KVSV), Asp-305, and Val-327.

The protein belongs to the EPSP synthase family. MurA subfamily.

It is found in the cytoplasm. It catalyses the reaction phosphoenolpyruvate + UDP-N-acetyl-alpha-D-glucosamine = UDP-N-acetyl-3-O-(1-carboxyvinyl)-alpha-D-glucosamine + phosphate. It functions in the pathway cell wall biogenesis; peptidoglycan biosynthesis. Its function is as follows. Cell wall formation. Adds enolpyruvyl to UDP-N-acetylglucosamine. This chain is UDP-N-acetylglucosamine 1-carboxyvinyltransferase, found in Salmonella gallinarum (strain 287/91 / NCTC 13346).